Here is a 228-residue protein sequence, read N- to C-terminus: Probable septum site-determining protein MinC (228 aa).

Belongs to the MinC family. As to quaternary structure, interacts with MinD and FtsZ.

Functionally, cell division inhibitor that blocks the formation of polar Z ring septums. Rapidly oscillates between the poles of the cell to destabilize FtsZ filaments that have formed before they mature into polar Z rings. Prevents FtsZ polymerization. This chain is Probable septum site-determining protein MinC, found in Pectobacterium carotovorum subsp. carotovorum (strain PC1).